Here is a 248-residue protein sequence, read N- to C-terminus: uncharacterized protein (248 aa).

8–32 lines the NADP(+) pocket; it reads IVTGAAQGIGQAYAQALAREGASVV. S143 lines the substrate pocket. The Proton acceptor role is filled by Y153.

The protein belongs to the short-chain dehydrogenases/reductases (SDR) family.

This is an uncharacterized protein from Mycobacterium tuberculosis (strain CDC 1551 / Oshkosh).